Reading from the N-terminus, the 395-residue chain is GPI-anchor transamidase (395 aa).

A signal peptide spans 1 to 27; sequence MVDTCFLSRGLTTLAGLLLLPFGSLAA. The Lumenal portion of the chain corresponds to 28 to 368; it reads SQIEDQAEQF…PKLKDWHPPG (341 aa). Ca(2+) contacts are provided by D79, I82, E118, and D120. The Proton donor role is filled by H164. C206 acts as the Nucleophile; acyl-thioester intermediate in catalysis. The a protein site is built by C206, S232, and S234. An autoinhibitory loop region spans residues 231–236; the sequence is DSLSHQ. C275 and C280 are disulfide-bonded. The chain crosses the membrane as a helical span at residues 369–385; the sequence is GFILGLWALIIMVFFKT. Residues 386–395 lie on the Cytoplasmic side of the membrane; that stretch reads YGIKHMKFIF.

It belongs to the peptidase C13 family. As to quaternary structure, heteropentamer. Part of the GPI-anchor transamidase complex, consisting of PIGK, PIGT, PIGS, PIGU and GAA1. Interacts with GPAA1. Interacts with PIGT; this interaction, via a disulfide link, stabilizes the expression of GAA1 and PIGK and links them to PIGS. In terms of processing, the disulfide bond between PIGK/GPI8 and PIGT is important for normal enzyme activity.

It localises to the endoplasmic reticulum membrane. It functions in the pathway glycolipid biosynthesis; glycosylphosphatidylinositol-anchor biosynthesis. With respect to regulation, in the absence of proproteins substrates, exists in an inactive state with a disrupted catalytic site by an autoinhibitory loop. The binding of proprotein substrates, particularly the CSP region, to GPI-T triggers concerted conformational changes that alleviate the inhibition by the autoinhibitory loop. Meanwhile, proprotein residues near the omega- site induce the formation of a catalytic cleft for catalysis, following which the products are released and GPI-T reverts to the inactive state. Catalytic subunit of the glycosylphosphatidylinositol-anchor (GPI-anchor) transamidase (GPI-T) complex that catalyzes the formation of the linkage between a proprotein and a GPI-anchor and participates in GPI anchored protein biosynthesis. Recognizes diverse proproteins at a C-terminal signal peptide (CSP) region that lacks consensus sequence and replaces it with a GPI-anchor via a transamidation reaction. Transamidation catalysis reaction follows a two-phase mechanism. In the acyl-enzyme phase, the carbonyl group of the proproteins's omega-site undergoes a nucleophilic attack forming an enzyme-substrate thioester bond. Followed by a general acid catalysis that allows CSP releasing, regenerating the carbonyl, and forming the acyl-enzyme intermediate. In the GPI-anchor attachment phase, the amino group of the GPI-anchor's ethanolamine phosphate, the one on third mannose (EtNP3), mediates a nucleophilic attack on the carbonyl of the acyl-enzyme intermediate, replacing the CSP, allowing GPI-anchor attachment to the omega-residue, therefore forming the product and freeing the enzyme. The chain is GPI-anchor transamidase from Bos taurus (Bovine).